Reading from the N-terminus, the 297-residue chain is Small ribosomal subunit protein uS2 (297 aa).

The tract at residues 252-297 (GVPGTAFSAATAAPTSWEADGGDWAASSAAPAGESWAETQPAEAKW) is disordered. The segment covering 256–289 (TAFSAATAAPTSWEADGGDWAASSAAPAGESWAE) has biased composition (low complexity).

Belongs to the universal ribosomal protein uS2 family. In terms of assembly, component of the small ribosomal subunit. Mature ribosomes consist of a small (40S) and a large (60S) subunit. The 40S subunit contains about 33 different proteins and 1 molecule of RNA (18S). The 60S subunit contains about 49 different proteins and 3 molecules of RNA (25S, 5.8S and 5S). Interacts with rps21.

The protein localises to the cytoplasm. Required for the assembly and/or stability of the 40S ribosomal subunit. Required for the processing of the 20S rRNA-precursor to mature 18S rRNA in a late step of the maturation of 40S ribosomal subunits. In Aspergillus fumigatus (strain CBS 144.89 / FGSC A1163 / CEA10) (Neosartorya fumigata), this protein is Small ribosomal subunit protein uS2 (rps0).